A 263-amino-acid polypeptide reads, in one-letter code: Probable septum site-determining protein MinC (263 aa).

The segment at 107-159 (LPPSGARERPLDIKDSAPRKPAEEPSPSAGEARPEPAKAEEKPAEPVSRPTKV) is disordered. 2 stretches are compositionally biased toward basic and acidic residues: residues 112–129 (ARER…KPAE) and 138–150 (ARPE…EKPA).

The protein belongs to the MinC family. In terms of assembly, interacts with MinD and FtsZ.

Its function is as follows. Cell division inhibitor that blocks the formation of polar Z ring septums. Rapidly oscillates between the poles of the cell to destabilize FtsZ filaments that have formed before they mature into polar Z rings. Prevents FtsZ polymerization. The polypeptide is Probable septum site-determining protein MinC (Pseudomonas aeruginosa (strain LESB58)).